Consider the following 178-residue polypeptide: MSRIGNKVIVIPAGVSVEVNGATVTVKGPKGELVRSFNENITLEIAENEITVKRPNDTKEMKMLHGTTRALLANMVEGVSNGFSKALEMIGVGYRAQLQGTKLVLSVGKSHQDEVEAPENIKFVVATPTSIVVEGISKEAVGQTAAYIRSRRSPEPYKGKGIRYVGEYVRRKEGKTGK.

The protein belongs to the universal ribosomal protein uL6 family. Part of the 50S ribosomal subunit.

Functionally, this protein binds to the 23S rRNA, and is important in its secondary structure. It is located near the subunit interface in the base of the L7/L12 stalk, and near the tRNA binding site of the peptidyltransferase center. This is Large ribosomal subunit protein uL6 from Lactococcus lactis subsp. cremoris (strain MG1363).